The primary structure comprises 194 residues: Thymidylate kinase (194 aa).

7-14 contributes to the ATP binding site; that stretch reads GIDTAGKS.

The protein belongs to the thymidylate kinase family.

It catalyses the reaction dTMP + ATP = dTDP + ADP. Its function is as follows. Phosphorylation of dTMP to form dTDP in both de novo and salvage pathways of dTTP synthesis. In Nautilia profundicola (strain ATCC BAA-1463 / DSM 18972 / AmH), this protein is Thymidylate kinase.